A 318-amino-acid polypeptide reads, in one-letter code: Ribonuclease Z (318 aa).

7 residues coordinate Zn(2+): His62, His64, Asp66, His67, His144, Asp215, and His273. Catalysis depends on Asp66, which acts as the Proton acceptor.

Belongs to the RNase Z family. As to quaternary structure, homodimer. It depends on Zn(2+) as a cofactor.

The enzyme catalyses Endonucleolytic cleavage of RNA, removing extra 3' nucleotides from tRNA precursor, generating 3' termini of tRNAs. A 3'-hydroxy group is left at the tRNA terminus and a 5'-phosphoryl group is left at the trailer molecule.. In terms of biological role, zinc phosphodiesterase, which displays some tRNA 3'-processing endonuclease activity. Probably involved in tRNA maturation, by removing a 3'-trailer from precursor tRNA. This is Ribonuclease Z from Prochlorococcus marinus (strain MIT 9303).